Here is a 308-residue protein sequence, read N- to C-terminus: Tetraspanin-12 (308 aa).

Residues 1-41 are Cytoplasmic-facing; the sequence is MANRRQPVQHRAQQRVYRQSQIRYAPGAGGESEISCCVKYS. Residues 42-62 traverse the membrane as a helical segment; it reads VFSFNVIFFLLGFGLLLFGVW. Topologically, residues 63–86 are extracellular; sequence AQIEKNTFVNMLSKASKLYLDPTW. The chain crosses the membrane as a helical span at residues 87–107; that stretch reads PLLIVGFLTFIIGFSGCVGSL. The Cytoplasmic portion of the chain corresponds to 108–112; the sequence is RENTS. The chain crosses the membrane as a helical span at residues 113-133; that stretch reads FLTFYSTLLGLLLIAEFSAGV. The Extracellular segment spans residues 134 to 268; it reads FAYACRDQLD…PKLQLWLNNN (135 aa). A glycan (N-linked (GlcNAc...) asparagine) is linked at Asn213. A helical membrane pass occupies residues 269 to 289; that stretch reads MLLVAVSMVIIAIIQVLGICF. Residues 290–308 are Cytoplasmic-facing; sequence AQNLKSDILAQRAKWYYTH.

Belongs to the tetraspanin (TM4SF) family. In terms of assembly, may interact with protease sup-17; the interaction promotes sup-17 cell membrane localization. In terms of tissue distribution, expressed in the germline.

It localises to the cell membrane. Its subcellular location is the cytoplasmic vesicle membrane. The protein resides in the endosome membrane. The protein localises to the early endosome membrane. It is found in the late endosome membrane. It localises to the recycling endosome membrane. Its subcellular location is the golgi apparatus. The protein resides in the trans-Golgi network membrane. In terms of biological role, functions redundantly with tsp-14 isoform a to regulate body size, embryonic and vulva development. Functions redundantly with tsp-14 (isoforms a and b) to regulate cell fate specification in the postembryonic mesodermal M lineage and male development. May regulate BMP-like Sma/Mab signaling by mediating protease sup-17 trafficking to the cell surface. Together with tsp-14, functions redundantly to maintain cell surface levels of the BMP type II receptor daf-4 (but not BMP type I receptor sma-6), probably by regulating endosomal sorting of receptors and their targeting to degradative lysosomes. Together with tsp-14 involved in maintaining the structural and functional integrity of the endosomal network. Together with tsp-14, probably acts by modulating the activation of glp-1, a Notch-like receptor, to regulate germline maturation. Probably acts by modulating the activation of lin-12, a Notch-like receptor, to regulate cell fate specification such as the anchor cell/ventral uterine precursor cell decision. This is Tetraspanin-12 from Caenorhabditis elegans.